Here is a 91-residue protein sequence, read N- to C-terminus: Small integral membrane protein 12-A (91 aa).

The chain crosses the membrane as a helical span at residues 12–34; sequence YAPYITFPVAFVVGAVGYQLEWF.

This sequence belongs to the SMIM12 family.

It localises to the membrane. This chain is Small integral membrane protein 12-A (smim12-a), found in Xenopus laevis (African clawed frog).